The chain runs to 456 residues: tRNA modification GTPase MnmE (456 aa).

(6S)-5-formyl-5,6,7,8-tetrahydrofolate is bound by residues Arg24, Glu81, and Lys120. A TrmE-type G domain is found at 216 to 379 (GMTVVIAGRP…LREHLKACMG (164 aa)). Residue Asn226 coordinates K(+). GTP contacts are provided by residues 226–231 (NAGKSS), 245–251 (TEIAGTT), 270–273 (DTAG), 335–338 (NKAD), and 359–361 (SAR). Residue Ser230 coordinates Mg(2+). Residues Thr245, Ile247, and Thr250 each coordinate K(+). Thr251 contacts Mg(2+). Lys456 provides a ligand contact to (6S)-5-formyl-5,6,7,8-tetrahydrofolate.

It belongs to the TRAFAC class TrmE-Era-EngA-EngB-Septin-like GTPase superfamily. TrmE GTPase family. In terms of assembly, homodimer. Heterotetramer of two MnmE and two MnmG subunits. K(+) is required as a cofactor.

The protein resides in the cytoplasm. Exhibits a very high intrinsic GTPase hydrolysis rate. Involved in the addition of a carboxymethylaminomethyl (cmnm) group at the wobble position (U34) of certain tRNAs, forming tRNA-cmnm(5)s(2)U34. The polypeptide is tRNA modification GTPase MnmE (Pseudomonas syringae pv. syringae (strain B728a)).